Consider the following 2009-residue polypeptide: Sodium channel protein type 1 subunit alpha (2009 aa).

At 1-128 the chain is on the cytoplasmic side; it reads MEQTVLVPPG…KIAIKILVHS (128 aa). Over residues 28 to 48 the composition is skewed to basic and acidic residues; the sequence is RIAEEKAKNPKPDKKDDDENG. A disordered region spans residues 28-60; that stretch reads RIAEEKAKNPKPDKKDDDENGPKPNSDLEAGKN. One copy of the I repeat lies at 110–454; it reads ILTPFNPLRK…QQMLEQLKKQ (345 aa). A helical membrane pass occupies residues 129–146; the sequence is LFSMLIMCTILTNCVFMT. The Extracellular portion of the chain corresponds to 147 to 152; it reads MSNPPD. The chain crosses the membrane as a helical span at residues 153 to 177; sequence WTKNVEYTFTGIYTFESLIKIIARG. Residues 178–188 are Cytoplasmic-facing; sequence FCLEDFTFLRD. A helical transmembrane segment spans residues 189–205; the sequence is PWNWLDFTVITFAYVTE. The Extracellular portion of the chain corresponds to 206 to 213; it reads FVDLGNVS. Residue asparagine 211 is glycosylated (N-linked (GlcNAc...) asparagine). Residues 214-235 form a helical membrane-spanning segment; sequence ALRTFRVLRALKTISVIPGLKT. At 236–245 the chain is on the cytoplasmic side; that stretch reads IVGALIQSVK. The helical transmembrane segment at 246 to 269 threads the bilayer; the sequence is KLSDVMILTVFCLSVFALIGLQLF. Topologically, residues 270-369 are extracellular; that stretch reads MGNLRNKCVQ…YGYTSFDTFS (100 aa). Cystine bridges form between cysteine 277–cysteine 345 and cysteine 336–cysteine 351. Residues asparagine 284, asparagine 295, asparagine 301, asparagine 306, and asparagine 338 are each glycosylated (N-linked (GlcNAc...) asparagine). Residues 370-384 constitute an intramembrane region (pore-forming); sequence WAFLSLFRLMTQDFW. The Extracellular segment spans residues 385 to 397; that stretch reads ENLYQLTLRAAGK. Residues 398-423 traverse the membrane as a helical segment; that stretch reads TYMIFFVLVIFLGSFYLINLILAVVA. At 424–768 the chain is on the cytoplasmic side; it reads MAYEEQNQAT…HIVNLVVMDP (345 aa). The interval 458–528 is disordered; the sequence is AQQAAAATAS…EFHKSESEDS (71 aa). Serine 470 carries the phosphoserine modification. Residues 479–492 are compositionally biased toward low complexity; sequence LSDSSSEASKLSSK. Positions 495–506 are enriched in basic residues; it reads KERRNRRKKRKQ. Residues 507–528 are compositionally biased toward basic and acidic residues; sequence KEQSGGEEKDDDEFHKSESEDS. Phosphoserine is present on residues serine 523, serine 525, serine 550, serine 551, serine 607, and serine 730. The tract at residues 584 to 628 is disordered; the sequence is VGSENDFADDEHSTFEDNESRRDSLFVPRRHGERRNSNLSQTSRS. The segment covering 593–607 has biased composition (basic and acidic residues); the sequence is DEHSTFEDNESRRDS. Residues 750-1022 form an II repeat; it reads CSPYWLKVKH…QIAVDRMHKG (273 aa). The helical transmembrane segment at 769-787 threads the bilayer; the sequence is FVDLAITICIVLNTLFMAM. Residues 788 to 797 lie on the Extracellular side of the membrane; the sequence is EHYPMTEHFN. A helical membrane pass occupies residues 798–820; it reads HVLTVGNLVFTGIFTAEMFLKII. Over 821–830 the chain is Cytoplasmic; sequence AMDPYYYFQE. A helical transmembrane segment spans residues 831–849; that stretch reads GWNIFDGFIVTLSLVELGL. Residues 850–854 are Extracellular-facing; the sequence is ANVEG. Residues 855–874 form a helical membrane-spanning segment; that stretch reads LSVLRSFRLLRVFKLAKSWP. The Cytoplasmic segment spans residues 875–891; the sequence is TLNMLIKIIGNSVGALG. The helical transmembrane segment at 892–912 threads the bilayer; sequence NLTLVLAIIVFIFAVVGMQLF. The Extracellular portion of the chain corresponds to 913–938; the sequence is GKSYKDCVCKIATDCKLPRWHMNDFF. Cysteine 921 and cysteine 927 are joined by a disulfide. An intramembrane region (pore-forming) is located at residues 939–952; sequence HSFLIVFRVLCGEW. Residues 953 to 965 are Extracellular-facing; it reads IETMWDCMEVAGQ. A disulfide bridge links cysteine 959 with cysteine 968. Residues 966-992 form a helical membrane-spanning segment; it reads AMCLTVFMMVMVIRNLVVLNLFLALLL. The Cytoplasmic portion of the chain corresponds to 993-1218; that stretch reads SSFSADNLAA…RTCFRIVEHN (226 aa). The tract at residues 1129-1163 is disordered; it reads TEDFSSESDLEESKEKLNESSSSSEGSTVDIGAPA. One copy of the III repeat lies at 1200 to 1514; the sequence is RGKQWWNLRR…KKYYNAMKKL (315 aa). Residues 1219–1237 traverse the membrane as a helical segment; sequence WFETFIVFMILLSSGALAF. Residues 1238–1250 are Extracellular-facing; sequence EDIYIDQRKTIKT. A helical membrane pass occupies residues 1251-1276; that stretch reads MLEYADKVFTYIFILEMLLKWVAYGY. The Cytoplasmic segment spans residues 1277–1278; sequence QT. A helical membrane pass occupies residues 1279–1304; that stretch reads YFTNAWCWLDFLIVDVSLVSLTANAL. The Extracellular portion of the chain corresponds to 1305-1313; that stretch reads GYSELGAIK. A helical membrane pass occupies residues 1314 to 1332; it reads SLRTLRALRPLRALSRFEG. Residues 1333 to 1345 are Cytoplasmic-facing; that stretch reads MRVVVNALLGAIP. A helical membrane pass occupies residues 1346–1369; sequence SIMNVLLVCLIFWLIFSIMGVNLF. Topologically, residues 1370–1415 are extracellular; it reads AGKFYHCVNTTTGDTFEITEVNNHSDCLKLIERNETARWKNVKVNF. Cysteines 1376 and 1396 form a disulfide. Asparagine 1378, asparagine 1392, and asparagine 1403 each carry an N-linked (GlcNAc...) asparagine glycan. Positions 1416–1433 form an intramembrane region, pore-forming; sequence DNVGFGYLSLLQVATFKG. At 1434–1457 the chain is on the extracellular side; the sequence is WMDIMYAAVDSRNVELQPKYEESL. Residues 1458 to 1483 traverse the membrane as a helical segment; the sequence is YMYLYFVIFIIFGSFFTLNLFIGVII. Residues 1484-1541 are Cytoplasmic-facing; the sequence is DNFNQQKKKFGGQDIFMTEEQKKYYNAMKKLGSKKPQKPIPRPGNKFQGMVFDFVTRQ. Serine 1516 is subject to Phosphoserine; by PKC. One copy of the IV repeat lies at 1523 to 1821; it reads IPRPGNKFQG…WEKFDPDATQ (299 aa). The helical transmembrane segment at 1542-1560 threads the bilayer; it reads VFDISIMILICLNMVTMMV. Topologically, residues 1561–1571 are extracellular; sequence ETDDQSDYVTS. The interval 1561-1571 is S1-S2 loop of repeat IV; sequence ETDDQSDYVTS. The chain crosses the membrane as a helical span at residues 1572–1593; that stretch reads ILSRINLVFIVLFTGECVLKLI. The Cytoplasmic segment spans residues 1594–1601; it reads SLRHYYFT. The helical transmembrane segment at 1602 to 1623 threads the bilayer; the sequence is IGWNIFDFVVVILSIVGMFLAE. Residues 1619-1636 are S3b-S4 loop of repeat IV; it reads MFLAELIEKYFVSPTLFR. At 1624–1636 the chain is on the extracellular side; it reads LIEKYFVSPTLFR. The chain crosses the membrane as a helical span at residues 1637-1655; sequence VIRLARIGRILRLIKGAKG. The Cytoplasmic segment spans residues 1656–1665; that stretch reads IRTLLFALMM. The chain crosses the membrane as a helical span at residues 1666–1688; that stretch reads SLPALFNIGLLLFLVMFIYAIFG. Topologically, residues 1689–1711 are extracellular; sequence MSNFAYVKREVGIDDMFNFETFG. The pore-forming intramembrane region spans 1712–1726; it reads NSMICLFQITTSAGW. At 1727 to 1759 the chain is on the extracellular side; the sequence is DGLLAPILNSKPPDCDPNKVNPGSSVKGDCGNP. Cysteines 1741 and 1756 form a disulfide. A helical membrane pass occupies residues 1760-1788; sequence SVGIFFFVSYIIISFLVVVNMYIAVILEN. Over 1789 to 2009 the chain is Cytoplasmic; the sequence is FSVATEESAE…EGKDEKAKGK (221 aa). The IQ domain occupies 1915–1944; the sequence is EEVSAVIIQRAYRRHLLKRTVKQASFTYNK. A disordered region spans residues 1986 to 2009; that stretch reads YDRVTKPIVEKHEQEGKDEKAKGK. Basic and acidic residues predominate over residues 1988–2009; the sequence is RVTKPIVEKHEQEGKDEKAKGK.

It belongs to the sodium channel (TC 1.A.1.10) family. Nav1.1/SCN1A subfamily. As to quaternary structure, the Nav1.1 voltage-gated sodium channel consists of an ion-conducting alpha subunit SCN1A which is functional on its own regulated by one or more beta-1 (SCN1B), beta-2 (SCN2B), beta-3 (SCN3B) and beta-4 (SCN4B) subunits. SCN1B and SCN3B are non-covalently associated with SCN1A. SCN2B and SCN4B are disulfide-linked to SCN1A. SCN1B regulates both the expression at the plasma membrane and the voltage dependence of Nav1.1 inactivation. SCN3B and SCN4B reduce Nav1.1 conductance. Probably interacts with TMEM233; modulates the gating properties of NaV1.1. Interacts with FGF13; regulates the steady-state inactivation of Nav.1.1. In terms of processing, phosphorylation at Ser-1516 by PKC in a highly conserved cytoplasmic loop slows inactivation of the sodium channel and reduces peak sodium currents.

The protein resides in the cell membrane. The enzyme catalyses Na(+)(in) = Na(+)(out). With respect to regulation, activated by the spider toxins Hm1a and Hm1b (H.maculata, AC P60992 and AC P0DOC5) eliciting acute pain and mechanical allodynia. Inhibited by the conotoxin GVIIJ. Pore-forming subunit of Nav1.1, a voltage-gated sodium (Nav) channel that directly mediates the depolarizing phase of action potentials in excitable membranes. Navs, also called VGSCs (voltage-gated sodium channels) or VDSCs (voltage-dependent sodium channels), operate by switching between closed and open conformations depending on the voltage difference across the membrane. In the open conformation they allow Na(+) ions to selectively pass through the pore, along their electrochemical gradient. The influx of Na(+) ions provokes membrane depolarization, initiating the propagation of electrical signals throughout cells and tissues. By regulating the excitability of neurons, ensures that they respond appropriately to synaptic inputs, maintaining the balance between excitation and inhibition in brain neural circuits. Nav1.1 plays a role in controlling the excitability and action potential propagation from somatosensory neurons, thereby contributing to the sensory perception of mechanically-induced pain. In Rattus norvegicus (Rat), this protein is Sodium channel protein type 1 subunit alpha.